The primary structure comprises 480 residues: UDP-N-acetylmuramate--L-alanine ligase (480 aa).

127–133 (GTHGKTT) lines the ATP pocket.

Belongs to the MurCDEF family.

The protein resides in the cytoplasm. The catalysed reaction is UDP-N-acetyl-alpha-D-muramate + L-alanine + ATP = UDP-N-acetyl-alpha-D-muramoyl-L-alanine + ADP + phosphate + H(+). Its pathway is cell wall biogenesis; peptidoglycan biosynthesis. Functionally, cell wall formation. This Blochmanniella floridana protein is UDP-N-acetylmuramate--L-alanine ligase.